The following is a 226-amino-acid chain: Thymidylate kinase (226 aa).

12 to 19 is a binding site for ATP; it reads GIDGAGKS.

The protein belongs to the thymidylate kinase family.

It carries out the reaction dTMP + ATP = dTDP + ADP. Its function is as follows. Phosphorylation of dTMP to form dTDP in both de novo and salvage pathways of dTTP synthesis. This chain is Thymidylate kinase, found in Verminephrobacter eiseniae (strain EF01-2).